Consider the following 254-residue polypeptide: MDLTNKNVIFVAALGGIGLDTSRELVKRNLKNFVILDRVENPTALAELKAINPKVNITFHTYDVTVPVAESKKLLKKIFDQLKTVDILINGAGILDDHQIERTIAINFTGLVNTTTAILDFWDKRKGGPGGIIANICSVTGFNAIHQVPVYSASKAAVVSFTNSLAKLAPITGVTAYSINPGITRTPLVHTFNSWLDVEPRVAELLLSHPTQTSEQCGQNFVKAIEANKNGAIWKLDLGTLEAIEWTKHWDSHI.

Met-1 carries the N-acetylmethionine modification. Position 10–33 (10–33) interacts with NAD(+); sequence FVAALGGIGLDTSRELVKRNLKNF. Ser-138 provides a ligand contact to substrate. Tyr-151 (proton acceptor) is an active-site residue.

It belongs to the short-chain dehydrogenases/reductases (SDR) family. As to quaternary structure, homodimer.

The catalysed reaction is a primary alcohol + NAD(+) = an aldehyde + NADH + H(+). It catalyses the reaction a secondary alcohol + NAD(+) = a ketone + NADH + H(+). This Drosophila lebanonensis (Fruit fly) protein is Alcohol dehydrogenase (Adh).